A 201-amino-acid polypeptide reads, in one-letter code: Holliday junction branch migration complex subunit RuvA (201 aa).

Positions 1-63 are domain I; sequence MIEYVRGELA…EDAYVLYGFA (63 aa). Residues 64–142 form a domain II region; the sequence is DKQEREIFLL…TMGATVAGGS (79 aa). Positions 143–151 are flexible linker; the sequence is ASAGMLLQS. The interval 152-201 is domain III; that stretch reads ASVEVQEEAVAALTMLGFAAAPSQKVVLAILKEEPDAPVEKVIKLALKRL.

Belongs to the RuvA family. As to quaternary structure, homotetramer. Forms an RuvA(8)-RuvB(12)-Holliday junction (HJ) complex. HJ DNA is sandwiched between 2 RuvA tetramers; dsDNA enters through RuvA and exits via RuvB. An RuvB hexamer assembles on each DNA strand where it exits the tetramer. Each RuvB hexamer is contacted by two RuvA subunits (via domain III) on 2 adjacent RuvB subunits; this complex drives branch migration. In the full resolvosome a probable DNA-RuvA(4)-RuvB(12)-RuvC(2) complex forms which resolves the HJ.

The protein localises to the cytoplasm. The RuvA-RuvB-RuvC complex processes Holliday junction (HJ) DNA during genetic recombination and DNA repair, while the RuvA-RuvB complex plays an important role in the rescue of blocked DNA replication forks via replication fork reversal (RFR). RuvA specifically binds to HJ cruciform DNA, conferring on it an open structure. The RuvB hexamer acts as an ATP-dependent pump, pulling dsDNA into and through the RuvAB complex. HJ branch migration allows RuvC to scan DNA until it finds its consensus sequence, where it cleaves and resolves the cruciform DNA. This is Holliday junction branch migration complex subunit RuvA from Bacteroides thetaiotaomicron (strain ATCC 29148 / DSM 2079 / JCM 5827 / CCUG 10774 / NCTC 10582 / VPI-5482 / E50).